Consider the following 374-residue polypeptide: Flavonoid O-methyltransferase-like protein Os11g0303600 (374 aa).

Asp242, Asp262, Met263, and Lys276 together coordinate S-adenosyl-L-homocysteine. The active-site Proton acceptor is the His280.

It belongs to the class I-like SAM-binding methyltransferase superfamily. Cation-independent O-methyltransferase family. COMT subfamily.

This is Flavonoid O-methyltransferase-like protein Os11g0303600 from Oryza sativa subsp. japonica (Rice).